Consider the following 326-residue polypeptide: Putative ABC transporter ATP-binding protein MA_4020 (326 aa).

Residues 1–12 (MTISTLSSSYGN) are compositionally biased toward polar residues. A disordered region spans residues 1-34 (MTISTLSSSYGNAQDVPAEDSDRHGSIEPGSEKA). Positions 46–281 (LEVKNLCHRY…PELLRKAHLR (236 aa)) constitute an ABC transporter domain. ATP is bound at residue 80 to 87 (GANGAGKS).

This sequence belongs to the ABC transporter superfamily.

It is found in the cell membrane. Its function is as follows. Probably part of an ABC transporter complex. Responsible for energy coupling to the transport system. This chain is Putative ABC transporter ATP-binding protein MA_4020, found in Methanosarcina acetivorans (strain ATCC 35395 / DSM 2834 / JCM 12185 / C2A).